The primary structure comprises 862 residues: Squamosa promoter-binding-like protein 1 (862 aa).

Residues 55–98 (KRRRVSPEDDDGEECINAATTNGDDGQISGQRGRSSEDEMPRQG) form a disordered region. Polar residues predominate over residues 72–87 (AATTNGDDGQISGQRG). The SBP-type zinc finger occupies 104 to 181 (GPCCQVDGCT…AQHNRRRRKV (78 aa)). Zn(2+) contacts are provided by cysteine 107, cysteine 112, cysteine 129, histidine 132, cysteine 148, cysteine 151, histidine 155, and cysteine 167. The Bipartite nuclear localization signal motif lies at 164–180 (KKSCRSRLAQHNRRRRK).

As to expression, ubiquitous.

Its subcellular location is the nucleus. Functionally, trans-acting factor that binds specifically to the consensus nucleotide sequence 5'-TNCGTACAA-3'. This Oryza sativa subsp. japonica (Rice) protein is Squamosa promoter-binding-like protein 1 (SPL1).